The primary structure comprises 296 residues: GTP-binding protein GEM (296 aa).

Disordered stretches follow at residues 1–20 (MTLN…PQQQ) and 37–68 (PHQY…SVIS). Over residues 57–68 (SWSSDSTDSVIS) the composition is skewed to low complexity. GTP-binding positions include 82 to 89 (GEQGVGKS) and 191 to 194 (NKSD). The calmodulin-binding stretch occupies residues 266–285 (ARRFWGKIVAKNNKNMAFKL).

The protein belongs to the small GTPase superfamily. RGK family. Interacts with calmodulin in a Ca(2+)-dependent manner. Binds ROCK1. Post-translationally, phosphorylated on tyrosine residues.

The protein localises to the cell membrane. Its function is as follows. Could be a regulatory protein, possibly participating in receptor-mediated signal transduction at the plasma membrane. Has guanine nucleotide-binding activity but undetectable intrinsic GTPase activity. The chain is GTP-binding protein GEM (GEM) from Pongo abelii (Sumatran orangutan).